The chain runs to 128 residues: Cystatin-12 (128 aa).

Residues 1-21 form the signal peptide; that stretch reads MLWKSVLSVALIVLGIHDCSF. 2 disulfides stabilise this stretch: Cys-82/Cys-92 and Cys-105/Cys-125. N-linked (GlcNAc...) asparagine glycosylation is present at Asn-122.

It belongs to the cystatin family. In terms of tissue distribution, located at the very proximal caput epididymis (at protein level). Expressed in epididymis, Sertoli cells and testis. Also found to be weakly expressed in ovary and prostate.

It is found in the secreted. Functionally, may play a specialized role in spermatogenesis. This is Cystatin-12 (Cst12) from Mus musculus (Mouse).